We begin with the raw amino-acid sequence, 557 residues long: Dihydroxy-acid dehydratase (557 aa).

Cys-50 contributes to the [2Fe-2S] cluster binding site. Position 82 (Asp-82) interacts with Mg(2+). A [2Fe-2S] cluster-binding site is contributed by Cys-123. Mg(2+) is bound by residues Asp-124 and Lys-125. Lys-125 carries the N6-carboxylysine modification. Cys-195 provides a ligand contact to [2Fe-2S] cluster. Glu-447 is a Mg(2+) binding site. Ser-473 acts as the Proton acceptor in catalysis.

The protein belongs to the IlvD/Edd family. As to quaternary structure, homodimer. It depends on [2Fe-2S] cluster as a cofactor. Requires Mg(2+) as cofactor.

It catalyses the reaction (2R)-2,3-dihydroxy-3-methylbutanoate = 3-methyl-2-oxobutanoate + H2O. It carries out the reaction (2R,3R)-2,3-dihydroxy-3-methylpentanoate = (S)-3-methyl-2-oxopentanoate + H2O. The protein operates within amino-acid biosynthesis; L-isoleucine biosynthesis; L-isoleucine from 2-oxobutanoate: step 3/4. It functions in the pathway amino-acid biosynthesis; L-valine biosynthesis; L-valine from pyruvate: step 3/4. Functions in the biosynthesis of branched-chain amino acids. Catalyzes the dehydration of (2R,3R)-2,3-dihydroxy-3-methylpentanoate (2,3-dihydroxy-3-methylvalerate) into 2-oxo-3-methylpentanoate (2-oxo-3-methylvalerate) and of (2R)-2,3-dihydroxy-3-methylbutanoate (2,3-dihydroxyisovalerate) into 2-oxo-3-methylbutanoate (2-oxoisovalerate), the penultimate precursor to L-isoleucine and L-valine, respectively. The protein is Dihydroxy-acid dehydratase of Herminiimonas arsenicoxydans.